The chain runs to 163 residues: uncharacterized protein (163 aa).

Residues 1–10 (MGVPRAREGR) are compositionally biased toward basic and acidic residues. Residues 1–163 (MGVPRAREGR…WSFTPLRWGS (163 aa)) form a disordered region.

This is an uncharacterized protein from Homo sapiens (Human).